The primary structure comprises 114 residues: Nucleoid-associated protein MAE_23910 (114 aa).

It belongs to the YbaB/EbfC family. As to quaternary structure, homodimer.

Its subcellular location is the cytoplasm. The protein localises to the nucleoid. Functionally, binds to DNA and alters its conformation. May be involved in regulation of gene expression, nucleoid organization and DNA protection. This chain is Nucleoid-associated protein MAE_23910, found in Microcystis aeruginosa (strain NIES-843 / IAM M-2473).